A 142-amino-acid polypeptide reads, in one-letter code: MSADSTTKFGFVCVQNAGRSQMSTAFAERERERRDLEDSVEILTGGTHPADHVHEEVVEVMGEEGFDLSERTPREVSTDELESCDIVATMGCSTLELDAETVDVRDWALDDPDGQEMEQVREIRDDIEQRVVDLFDEFNPDD.

Belongs to the low molecular weight phosphotyrosine protein phosphatase family.

Functionally, reduces arsenate [As(V)] to arsenite [As(III)]. This is Putative arsenate reductase (arsC) from Halobacterium salinarum (strain ATCC 700922 / JCM 11081 / NRC-1) (Halobacterium halobium).